The sequence spans 187 residues: ATP synthase subunit delta, chloroplastic (187 aa).

It belongs to the ATPase delta chain family. As to quaternary structure, F-type ATPases have 2 components, F(1) - the catalytic core - and F(0) - the membrane proton channel. F(1) has five subunits: alpha(3), beta(3), gamma(1), delta(1), epsilon(1). CF(0) has four main subunits: a(1), b(1), b'(1) and c(10-14). The alpha and beta chains form an alternating ring which encloses part of the gamma chain. F(1) is attached to F(0) by a central stalk formed by the gamma and epsilon chains, while a peripheral stalk is formed by the delta, b and b' chains.

It is found in the plastid. It localises to the chloroplast thylakoid membrane. F(1)F(0) ATP synthase produces ATP from ADP in the presence of a proton or sodium gradient. F-type ATPases consist of two structural domains, F(1) containing the extramembraneous catalytic core and F(0) containing the membrane proton channel, linked together by a central stalk and a peripheral stalk. During catalysis, ATP synthesis in the catalytic domain of F(1) is coupled via a rotary mechanism of the central stalk subunits to proton translocation. Functionally, this protein is part of the stalk that links CF(0) to CF(1). It either transmits conformational changes from CF(0) to CF(1) or is implicated in proton conduction. In Trieres chinensis (Marine centric diatom), this protein is ATP synthase subunit delta, chloroplastic.